An 821-amino-acid chain; its full sequence is Tip elongation aberrant protein Tea4 (821 aa).

2 stretches are compositionally biased toward polar residues: residues 1–11 and 21–31; these read MLHMNSASSAD and DPTQQNDSTII. The segment at 1–36 is disordered; it reads MLHMNSASSADSMEIMESHFDPTQQNDSTIIESRYS. The residue at position 35 (Tyr-35) is a Phosphotyrosine. At Ser-36 the chain carries Phosphoserine. Tyr-40 carries the phosphotyrosine modification. A disordered region spans residues 51–79; sequence ISGENSEPQTVASQEISDSQEEDTTLTSS. The segment covering 53–67 has biased composition (polar residues); that stretch reads GENSEPQTVASQEIS. Residues 130 to 191 form the SH3 domain; it reads IDCNFVHAIR…PAEYIETPSE (62 aa). 5 disordered regions span residues 267–292, 333–352, 473–500, 529–570, and 664–697; these read LEIE…DHVT, SSTT…FSSA, DSFD…MPNN, SPRL…SSLL, and DASS…SFSS. Residues 268 to 282 are compositionally biased toward low complexity; sequence EIEFSDSSDSSLSAE. Over residues 283 to 292 the composition is skewed to basic and acidic residues; that stretch reads YRSESEDHVT. Polar residues-rich tracts occupy residues 333 to 350 and 473 to 484; these read SSTT…SKFS and DSFDTSNVTQDA. Residues 527 to 821 form an interaction with tea1 region; it reads LLSPRLYSSS…EMASLLNTNR (295 aa). The span at 529 to 541 shows a compositional bias: low complexity; the sequence is SPRLYSSSTPSSP. Positions 554 to 563 are enriched in basic and acidic residues; it reads ENRKQADKVE. Residues 599–821 form an interaction with win1 region; sequence KAFSQSSIDL…EMASLLNTNR (223 aa). Over residues 665 to 674 the composition is skewed to low complexity; that stretch reads ASSAIPSSSI. Residues 675-687 are compositionally biased toward basic and acidic residues; the sequence is SHDEDLLPRKNTE.

As to quaternary structure, an essential component of the tea1 cell-end complex. Interacts with win1, tea1 and for3. Interacts with tip1 in the presence of tea1.

It localises to the cytoplasm. Its subcellular location is the cytoskeleton. Cell polarity factor essential for the bipolar localization and function of structures containing the cell-end marker tea1 during the normal cell cycle. Regulates cell polarity in complex with tea1 and together with the stress signaling MAPK cascade, contributes to cell polarity maintenance under stress conditions. Required for the localization of for3 at the cell tip specifically during initiation of bipolar growth. During the new end take off (NETO), formation of a protein complex that includes tea1, tea4 and for3 is necessary and sufficient for the establishment of cell polarity and localized actin assembly at new cell ends. The chain is Tip elongation aberrant protein Tea4 from Schizosaccharomyces pombe (strain 972 / ATCC 24843) (Fission yeast).